The chain runs to 129 residues: Follitropin subunit beta (129 aa).

A signal peptide spans 1-18 (MKSVQLCLLLWCWRAICC). Disulfide bonds link Cys-21-Cys-69, Cys-35-Cys-84, Cys-38-Cys-122, Cys-46-Cys-100, Cys-50-Cys-102, and Cys-105-Cys-112. Asn-25 and Asn-42 each carry an N-linked (GlcNAc...) asparagine glycan.

This sequence belongs to the glycoprotein hormones subunit beta family. Heterodimer. The active follitropin is a heterodimer composed of an alpha chain/CGA shared with other hormones and a unique beta chain/FSHB shown here.

Its subcellular location is the secreted. Together with the alpha chain CGA constitutes follitropin, the follicle-stimulating hormone, and provides its biological specificity to the hormone heterodimer. Binds FSHR, a G protein-coupled receptor, on target cells to activate downstream signaling pathways. Follitropin is involved in follicle development and spermatogenesis in reproductive organs. The sequence is that of Follitropin subunit beta (FSHB) from Meriones unguiculatus (Mongolian jird).